Here is a 612-residue protein sequence, read N- to C-terminus: Glycosyltransferase 25 family member (612 aa).

The first 20 residues, 1-20 (MNKQVIFGLLLACILVCISG), serve as a signal peptide directing secretion. 4 N-linked (GlcNAc...) asparagine glycosylation sites follow: N106, N227, N263, and N524. The short motif at 609–612 (HQEL) is the Prevents secretion from ER element.

The protein belongs to the glycosyltransferase 25 family.

It is found in the endoplasmic reticulum lumen. This Drosophila melanogaster (Fruit fly) protein is Glycosyltransferase 25 family member.